Here is a 457-residue protein sequence, read N- to C-terminus: tRNA-2-methylthio-N(6)-dimethylallyladenosine synthase (457 aa).

Residues 3-120 (KKVYIKTFGC…LPQMIDQRRA (118 aa)) enclose the MTTase N-terminal domain. The [4Fe-4S] cluster site is built by cysteine 12, cysteine 49, cysteine 83, cysteine 157, cysteine 161, and cysteine 164. In terms of domain architecture, Radical SAM core spans 143–377 (RVEGPSAFVS…QATIEENVAR (235 aa)). The TRAM domain maps to 380–447 (RSMVGKVERI…PHSLRGELLL (68 aa)).

The protein belongs to the methylthiotransferase family. MiaB subfamily. In terms of assembly, monomer. The cofactor is [4Fe-4S] cluster.

The protein resides in the cytoplasm. It carries out the reaction N(6)-dimethylallyladenosine(37) in tRNA + (sulfur carrier)-SH + AH2 + 2 S-adenosyl-L-methionine = 2-methylsulfanyl-N(6)-dimethylallyladenosine(37) in tRNA + (sulfur carrier)-H + 5'-deoxyadenosine + L-methionine + A + S-adenosyl-L-homocysteine + 2 H(+). Functionally, catalyzes the methylthiolation of N6-(dimethylallyl)adenosine (i(6)A), leading to the formation of 2-methylthio-N6-(dimethylallyl)adenosine (ms(2)i(6)A) at position 37 in tRNAs that read codons beginning with uridine. The polypeptide is tRNA-2-methylthio-N(6)-dimethylallyladenosine synthase (Burkholderia ambifaria (strain MC40-6)).